The sequence spans 90 residues: Cell division protein CrgA (90 aa).

The interval 1–25 (MPKARVTKNETAPVSSNPSANRTPV) is disordered. Residues 9–22 (NETAPVSSNPSANR) are compositionally biased toward polar residues. 2 helical membrane passes run 38–58 (VIMF…YLVG) and 67–87 (LGAW…LMTM).

The protein belongs to the CrgA family.

It is found in the cell membrane. Its function is as follows. Involved in cell division. The protein is Cell division protein CrgA of Corynebacterium glutamicum (strain ATCC 13032 / DSM 20300 / JCM 1318 / BCRC 11384 / CCUG 27702 / LMG 3730 / NBRC 12168 / NCIMB 10025 / NRRL B-2784 / 534).